The chain runs to 219 residues: Pyridoxal 5'-phosphate synthase subunit PDX2 (219 aa).

52-54 contributes to the L-glutamine binding site; sequence GES. Cys87 (nucleophile) is an active-site residue. Residues Arg121 and 153 to 154 each bind L-glutamine; that span reads IR. Active-site charge relay system residues include His196 and Glu198.

This sequence belongs to the glutaminase PdxT/SNO family. As to quaternary structure, in the presence of Pdx1, forms a dodecamer of heterodimers. Only shows activity in the heterodimer.

The protein localises to the cytoplasm. It carries out the reaction aldehydo-D-ribose 5-phosphate + D-glyceraldehyde 3-phosphate + L-glutamine = pyridoxal 5'-phosphate + L-glutamate + phosphate + 3 H2O + H(+). It catalyses the reaction L-glutamine + H2O = L-glutamate + NH4(+). It functions in the pathway cofactor biosynthesis; pyridoxal 5'-phosphate biosynthesis. Its function is as follows. Catalyzes the hydrolysis of glutamine to glutamate and ammonia as part of the biosynthesis of pyridoxal 5'-phosphate. The resulting ammonia molecule is channeled to the active site of Pdx1. In Plasmodium falciparum (isolate 3D7), this protein is Pyridoxal 5'-phosphate synthase subunit PDX2.